Reading from the N-terminus, the 247-residue chain is 3,4-dihydroxy-2-butanone 4-phosphate synthase (247 aa).

D-ribulose 5-phosphate-binding positions include 38 to 39 (RE), Asp43, 179 to 183 (RMGQT), and Glu203. Mg(2+) is bound at residue Glu39.

This sequence belongs to the DHBP synthase family. In terms of assembly, homodimer. It depends on Mg(2+) as a cofactor. Mn(2+) serves as cofactor.

It catalyses the reaction D-ribulose 5-phosphate = (2S)-2-hydroxy-3-oxobutyl phosphate + formate + H(+). It participates in cofactor biosynthesis; riboflavin biosynthesis; 2-hydroxy-3-oxobutyl phosphate from D-ribulose 5-phosphate: step 1/1. Its function is as follows. Catalyzes the conversion of D-ribulose 5-phosphate to formate and 3,4-dihydroxy-2-butanone 4-phosphate. In Methanosarcina mazei (strain ATCC BAA-159 / DSM 3647 / Goe1 / Go1 / JCM 11833 / OCM 88) (Methanosarcina frisia), this protein is 3,4-dihydroxy-2-butanone 4-phosphate synthase.